Here is a 1495-residue protein sequence, read N- to C-terminus: Terminal uridylyltransferase 7 (1495 aa).

4 disordered regions span residues 1 to 30 (MGDT…GHPQ), 43 to 69 (HGSK…RKGP), 89 to 140 (WMND…EDGY), and 162 to 205 (LETT…PVID). The segment covering 15 to 26 (DRGTMDDDDFRR) has biased composition (basic and acidic residues). 2 positions are modified to phosphothreonine: Thr-57 and Thr-64. Composition is skewed to basic and acidic residues over residues 92–118 (DSHK…EFKP) and 128–140 (QRKD…EDGY). Residues Ser-132 and Ser-172 each carry the phosphoserine modification. A compositionally biased stretch (basic residues) spans 178-187 (QRSRPRKPRK). Residues 244–274 (YTCRLCDVLIESIAFAHKHIKEKRHKKNIKE) form a Matrin-type zinc finger. A PAP-associated 1 domain is found at 551 to 600 (VGQLWVELLRFYALEFNLADLVISIRVKELVSRELKDWPKKRIAIEDPYS). Ser-600 is modified (phosphoserine). The segment covering 734–756 (DDYKGDKVYHPETGRKNEKEKVG) has biased composition (basic and acidic residues). Disordered stretches follow at residues 734-757 (DDYK…KVGR) and 831-898 (THSV…EDDE). Over residues 831-841 (THSVQGQTSEM) the composition is skewed to polar residues. Acidic residues-rich tracts occupy residues 843-859 (PSDE…EEEE), 868-880 (EDED…DELD), and 887-898 (GDEDALSEEDDE). Ser-844 is subject to Phosphoserine. Residues Ser-893 and Ser-939 each carry the phosphoserine modification. Residues 951–1495 (SKLIFTKGKS…ASAKRTQQES (545 aa)) form a sufficient for monouridylation activity region. A CCHC-type 1 zinc finger spans residues 963-980 (VVCSLCKREGHLKKDCPE). UTP is bound by residues 1047 to 1050 (SSKN), 1057 to 1060 (SDLD), Asn-1130, Lys-1152, 1170 to 1174 (SYAYT), and His-1286. The Mg(2+) site is built by Asp-1058 and Asp-1060. The 54-residue stretch at 1233–1286 (SVGQLWLGLLRFYTEEFDFKEHVISIRRKSLLTTFKKQWTSKYIVIEDPFDLNH) folds into the PAP-associated 2 domain. A CCHC-type 2 zinc finger spans residues 1345 to 1362 (RCCRICGKIGHFMKDCPM). Disordered regions lie at residues 1367 to 1424 (RRRR…MRAA) and 1466 to 1495 (CPQF…QQES). Over residues 1381–1410 (PENKEKRSKEDKEIHNKYTEREVSTKEDKP) the composition is skewed to basic and acidic residues. The CCHC-type 3 zinc finger occupies 1451–1468 (KRCFICGREGHIKKECPQ). A compositionally biased stretch (polar residues) spans 1470–1485 (KGSSGSLSSKYMTQGK).

Belongs to the DNA polymerase type-B-like family. In terms of assembly, interacts with MOV10; the interaction is RNA-dependent. The cofactor is Mg(2+). It depends on Mn(2+) as a cofactor.

It localises to the cytoplasm. The enzyme catalyses RNA(n) + UTP = RNA(n)-3'-uridine ribonucleotide + diphosphate. Uridylyltransferase that mediates the terminal uridylation of mRNAs with short (less than 25 nucleotides) poly(A) tails, hence facilitating global mRNA decay. Essential for both oocyte maturation and fertility. Through 3' terminal uridylation of mRNA, sculpts, with TUT7, the maternal transcriptome by eliminating transcripts during oocyte growth. Involved in microRNA (miRNA)-induced gene silencing through uridylation of deadenylated miRNA targets. Also functions as an integral regulator of microRNA biogenesiS using 3 different uridylation mechanisms. Acts as a suppressor of miRNA biogenesis by mediating the terminal uridylation of some miRNA precursors, including that of let-7 (pre-let-7). Uridylated pre-let-7 RNA is not processed by Dicer and undergo degradation. Pre-let-7 uridylation is strongly enhanced in the presence of LIN28A. In the absence of LIN28A, TUT7 and TUT4 monouridylate group II pre-miRNAs, which includes most of pre-let7 members, that shapes an optimal 3' end overhang for efficient processing. Add oligo-U tails to truncated pre-miRNAS with a 5' overhang which may promote rapid degradation of non-functional pre-miRNA species. Does not play a role in replication-dependent histone mRNA degradation. Due to functional redundancy between TUT4 and TUT7, the identification of the specific role of each of these proteins is difficult. TUT4 and TUT7 restrict retrotransposition of long interspersed element-1 (LINE-1) in cooperation with MOV10 counteracting the RNA chaperonne activity of L1RE1. TUT7 uridylates LINE-1 mRNAs in the cytoplasm which inhibits initiation of reverse transcription once in the nucleus, whereas uridylation by TUT4 destabilizes mRNAs in cytoplasmic ribonucleoprotein granules. This Homo sapiens (Human) protein is Terminal uridylyltransferase 7.